Reading from the N-terminus, the 605-residue chain is Kelch-like protein 41b (605 aa).

In terms of domain architecture, BTB spans 32–102 (VDCTLKIGDR…YSAEIDLVDD (71 aa)). Residues 136–238 (CLAVFRLGLV…PEKYFREKVE (103 aa)) form the BACK domain. Kelch repeat units lie at residues 345-397 (QLFI…ESEN), 398-446 (LLFA…SHNN), 447-494 (LVYC…VHKG), 496-541 (IIVT…SSGG), and 543-598 (LFSI…MRLN).

The protein localises to the cytoplasm. It is found in the cytoskeleton. Its subcellular location is the sarcoplasmic reticulum membrane. It localises to the endoplasmic reticulum membrane. Functionally, involved in skeletal muscle development and maintenance. The polypeptide is Kelch-like protein 41b (Danio rerio (Zebrafish)).